Consider the following 120-residue polypeptide: cAMP-responsive element-binding protein-like 2 (120 aa).

Residues 1 to 24 form a disordered region; sequence MDDSKVVGGKVKKPGKRGRKPAKI. Residues 10–21 show a composition bias toward basic residues; it reads KVKKPGKRGRKP. The bZIP domain maps to 23–86; that stretch reads KIDLKAKLER…MAMDQGKIPS (64 aa). A basic motif region spans residues 29-60; sequence KLERSRQSARECRARKKLRYQYLEELVSSRER. The segment at 62–69 is leucine-zipper; sequence ICALREEL. The interval 93 to 120 is disordered; the sequence is TGEEQNKSQQNSSRHTKAGKTDANSNSW.

It belongs to the bZIP family. ATF subfamily. In terms of assembly, interacts with CREB1; regulates CREB1 phosphorylation, stability and transcriptional activity. Phosphorylated by AMPK.

It localises to the nucleus. Probable regulator of CREB1 transcriptional activity which is involved in adipose cells differentiation. May also play a regulatory role in the cell cycle. Identification in a chromosomal region frequently deleted in various cancers suggests that it might act as a tumor suppressor. The chain is cAMP-responsive element-binding protein-like 2 (CREBL2) from Homo sapiens (Human).